An 85-amino-acid polypeptide reads, in one-letter code: U1-theraphotoxin-Hs1a (85 aa).

An N-terminal signal peptide occupies residues 1 to 22; the sequence is MKVTLIAILTCAAVLVLHTTAA. The propeptide occupies 23 to 48; that stretch reads EELEAESQLMEVGMPDTELAAVDEER. Disulfide bonds link Cys-52/Cys-66, Cys-56/Cys-77, and Cys-71/Cys-82.

Heterodimer composed of the two variants Ile-58 and Gln-58. As to expression, expressed by the venom gland.

It is found in the secreted. In terms of biological role, lethal neurotoxin that blocks neuromuscular transmission. Acts cooperatively to potentiate the activity of huwentoxin-I. This toxin is active against insects. The chain is U1-theraphotoxin-Hs1a from Cyriopagopus schmidti (Chinese bird spider).